Reading from the N-terminus, the 1150-residue chain is RNA polymerase-associated protein CTR9 (1150 aa).

TPR repeat units lie at residues 143 to 176, 177 to 210, 212 to 245, 247 to 282, 320 to 353, 355 to 388, 432 to 464, 471 to 504, 594 to 627, 643 to 677, 679 to 711, 712 to 745, and 748 to 781; these read VRAWFYLFERDKSTNKYELADQQFNYVVKTNPKN, VLPLIGKAVIAFNKKDYKTAIYYFRKAIRQCRHT, ADLRVGIGHCFAKMGMMDKAKTAFERAMEIEPYN, SAMCGLGIILLNTYDHDSLKHAVSLFGRSYNLQTDH, AEAFYQMGRCRHAQGQFDGAYKYYYQARQANNGE, TLAHYGLGQMYIHRNEIEEAIKCFDTVHKRLPNN, YEACIDLAQLLEATDPKRSLELYENAIDLLVTN, PEMLNNVGALYMSMKQYEKAEHHFKRAKERLEEQ, PIVWTLIGNLHFAKNEWMPAQKKFEFILSKIFNN, FEQLLNPSRKKEDEKKYIDRALQMYQKALKLQPKN, YAANGIGCVLAYKRNWNDARDVFSQVRESTSEF, YDVWLNIAHVCMEREQWMAAVQMYSSAMKKFRKE, and STLQHYLAKAYYRANMLNEAKEALECAMLDQLDN. 2 coiled-coil regions span residues 848–916 and 972–1028; these read AEEA…NLRL and ERRE…AKQS. A disordered region spans residues 935 to 1150; sequence KRRGGGGRKR…KKKVIESDSD (216 aa). The span at 975 to 992 shows a compositional bias: basic residues; it reads ERRKKDKAAKKASRKKRE. 4 stretches are compositionally biased toward basic and acidic residues: residues 993-1005, 1013-1024, 1060-1084, and 1132-1150; these read RRDSGGPDSNRRD, EERDRKLQEKLS, DPRPPVDEFDSPTRTDSDSDRETTT, and RDSDGSDAPKKKVIESDSD.

As to quaternary structure, component of the PAF1 complex which consists of at least cdc-73, ctr-9, leo-1, pafo-1 and rtfo-1.

It localises to the nucleus. In terms of biological role, component of the PAF1 complex which is a multifunctional complex involved in transcription initiation via genetic interactions with TATA-binding proteins, elongation and transcription-coupled histone modification. Ctr-9 is required for epidermal microtubule organization during morphogenesis. In Caenorhabditis elegans, this protein is RNA polymerase-associated protein CTR9.